The chain runs to 201 residues: Syndecan-2 (201 aa).

The first 18 residues, 1–18 (MRRAWILLTLGLVACVSA), serve as a signal peptide directing secretion. Over 19–144 (ESRAELTSDK…HSDSLFKRTE (126 aa)) the chain is Extracellular. Residues S41, S55, and S57 are each glycosylated (O-linked (Xyl...) (glycosaminoglycan) serine). Disordered regions lie at residues 42-70 (GVYP…ELTT) and 90-130 (TLNI…DTNV). Residues 90-102 (TLNIQNKIPAQTK) show a composition bias toward polar residues. A glycan (O-linked (GalNAc...) threonine) is linked at T101. The segment covering 103–123 (SPEETDKEKVHLSDSERKMDP) has biased composition (basic and acidic residues). Phosphoserine; by FAM20C is present on S115. Residues 145–169 (VLAAVIAGGVIGFLFAIFLILLLVY) form a helical membrane-spanning segment. Residues 170–201 (RMRKKDEGSYDLGERKPSSAAYQKAPTKEFYA) are Cytoplasmic-facing. Positions 178 to 201 (SYDLGERKPSSAAYQKAPTKEFYA) are disordered. S187 is modified (phosphoserine).

The protein belongs to the syndecan proteoglycan family. Interacts (via cytoplasmic domain) with SARM1. Forms a complex with SDCBP and PDCD6IP. O-glycosylated with core 1 or possibly core 8 glycans. Contains heparan sulfate. Also contains chondroitin sulfate.

The protein localises to the membrane. Cell surface proteoglycan which regulates dendritic arbor morphogenesis. The protein is Syndecan-2 (SDC2) of Homo sapiens (Human).